Reading from the N-terminus, the 1000-residue chain is DENN domain-containing protein 2A (1000 aa).

Disordered regions lie at residues 1–155 (MLEA…LRFQ), 174–328 (DGSA…RKSY), 427–464 (KLLD…LGDL), and 491–525 (KRVK…LKAH). Polar residues predominate over residues 34 to 43 (QLNSVPNSGP). Basic and acidic residues-rich tracts occupy residues 56–70 (IKDK…KEPP), 79–117 (DGQE…DSRA), 140–155 (SQHR…LRFQ), and 221–237 (HLEV…DWKG). Pro residues-rich tracts occupy residues 249–258 (PPKPFINPVP) and 288–307 (PPLP…PPPT). A compositionally biased stretch (basic and acidic residues) spans 427 to 436 (KLLDTRKLSR). Residues 496 to 506 (LSQSTESNSGK) show a composition bias toward polar residues. Ser-544 carries the post-translational modification Phosphoserine. Positions 559–708 (EYFVVVSLHK…PFPALGKTII (150 aa)) constitute a uDENN domain. In terms of domain architecture, cDENN spans 730–863 (RLEHVDFESL…LQVALEHILE (134 aa)). The dDENN domain maps to 865–960 (RNDLACDQDG…QERELRRQDA (96 aa)).

The protein resides in the cytoplasm. It localises to the cytoskeleton. Functionally, guanine nucleotide exchange factor (GEF) which may activate RAB9A and RAB9B. Promotes the exchange of GDP to GTP, converting inactive GDP-bound Rab proteins into their active GTP-bound form. May play a role in late endosomes back to trans-Golgi network/TGN transport. This is DENN domain-containing protein 2A (Dennd2a) from Mus musculus (Mouse).